Here is a 440-residue protein sequence, read N- to C-terminus: Tuliposide B-converting enzyme 1, amyloplastic (440 aa).

The transit peptide at 1–58 (MSIVSFCSSLPAGPHGFKHGRGTRDMVHMPCIVRRTARSPAQACRLLRWNKYHCAAVP) directs the protein to the amyloplast. S232 (acyl-ester intermediate) is an active-site residue. Active-site charge relay system residues include D325 and H357.

The protein belongs to the AB hydrolase superfamily. Homodimer. In terms of processing, not glycosylated. As to expression, expressed in the pollen grains.

It localises to the plastid. The protein resides in the amyloplast. The enzyme catalyses 6-tuliposide B = tulipalin B + D-glucose. Its activity is regulated as follows. Inhibited by Ag(+), Cu(2+), Fe(2+), Hg(2+), V(3+) and phenylmethylsulfonyl fluoride (PMSF). In terms of biological role, lactone-forming carboxylesterase, specifically catalyzing intramolecular transesterification, but not hydrolysis. Involved in the biosynthesis of tulipalins, defensive chemicals that show antimicrobial activities against a broad range of strains of bacteria and fungi. Substrates are 6-tuliposide B &gt; 6-tuliposide A. This is Tuliposide B-converting enzyme 1, amyloplastic from Tulipa gesneriana (Garden tulip).